The chain runs to 275 residues: Large ribosomal subunit protein uL2 (275 aa).

Residues 222–257 form a disordered region; the sequence is GTAMNAVDHPHGGGRGRSKGNNQPRSPWNQPAKGFK. The segment covering 240–250 has biased composition (polar residues); it reads KGNNQPRSPWN.

The protein belongs to the universal ribosomal protein uL2 family. In terms of assembly, part of the 50S ribosomal subunit. Forms a bridge to the 30S subunit in the 70S ribosome.

One of the primary rRNA binding proteins. Required for association of the 30S and 50S subunits to form the 70S ribosome, for tRNA binding and peptide bond formation. It has been suggested to have peptidyltransferase activity; this is somewhat controversial. Makes several contacts with the 16S rRNA in the 70S ribosome. In Endomicrobium trichonymphae, this protein is Large ribosomal subunit protein uL2.